A 200-amino-acid polypeptide reads, in one-letter code: MTSTNKTLTQAILNFSKSYSQQHVEQFGHLPTVEHDEQWPSPCDLGSHDTSHHYWQAVAMESVQLADNKEEALSFENVESALNIELHPDIKIYFTTIFSGDIEAQSDDGELSLLFAWNKDDFERLQENIIGHILMKQKLKQVETVFFAVTDEEDMIISVDNSSGEVWVEQVGCKPHKKLSDSLAEFISQLTHKNVVSEKS.

This sequence belongs to the Syd family.

The protein resides in the cell inner membrane. Functionally, interacts with the SecY protein in vivo. May bind preferentially to an uncomplexed state of SecY, thus functioning either as a chelating agent for excess SecY in the cell or as a regulatory factor that negatively controls the translocase function. In Colwellia psychrerythraea (strain 34H / ATCC BAA-681) (Vibrio psychroerythus), this protein is Protein Syd.